A 141-amino-acid chain; its full sequence is Putative pre-16S rRNA nuclease (141 aa).

The protein belongs to the YqgF nuclease family.

It is found in the cytoplasm. Its function is as follows. Could be a nuclease involved in processing of the 5'-end of pre-16S rRNA. This chain is Putative pre-16S rRNA nuclease, found in Vibrio parahaemolyticus serotype O3:K6 (strain RIMD 2210633).